A 298-amino-acid polypeptide reads, in one-letter code: Inosose dehydratase (298 aa).

It belongs to the IolE/MocC family. Glutathione serves as cofactor. The cofactor is Co(2+). Requires Mn(2+) as cofactor.

It carries out the reaction scyllo-inosose = 3D-3,5/4-trihydroxycyclohexane-1,2-dione + H2O. The protein operates within polyol metabolism; myo-inositol degradation into acetyl-CoA; acetyl-CoA from myo-inositol: step 2/7. In terms of biological role, catalyzes the dehydration of inosose (2-keto-myo-inositol, 2KMI or 2,4,6/3,5-pentahydroxycyclohexanone) to 3D-(3,5/4)-trihydroxycyclohexane-1,2-dione (D-2,3-diketo-4-deoxy-epi-inositol). The chain is Inosose dehydratase from Clostridium tetani (strain Massachusetts / E88).